A 352-amino-acid chain; its full sequence is Putative formin-like protein 15b (352 aa).

The FH2 domain maps to 1-350; sequence MTLFNFIKLF…KDAKEAEMEK (350 aa).

Belongs to the formin-like family. Class-II subfamily.

The protein is Putative formin-like protein 15b (FH15B) of Arabidopsis thaliana (Mouse-ear cress).